We begin with the raw amino-acid sequence, 35 residues long: Photosystem II reaction center protein T (35 aa).

The chain crosses the membrane as a helical span at residues 3-23 (SVAYILILTLAIGVLFFAIAF).

The protein belongs to the PsbT family. As to quaternary structure, PSII is composed of 1 copy each of membrane proteins PsbA, PsbB, PsbC, PsbD, PsbE, PsbF, PsbH, PsbI, PsbJ, PsbK, PsbL, PsbM, PsbT, PsbX, PsbY, PsbZ, Psb30/Ycf12, peripheral proteins PsbO, CyanoQ (PsbQ), PsbU, PsbV and a large number of cofactors. It forms dimeric complexes.

The protein resides in the cellular thylakoid membrane. Its function is as follows. Found at the monomer-monomer interface of the photosystem II (PS II) dimer, plays a role in assembly and dimerization of PSII. PSII is a light-driven water plastoquinone oxidoreductase, using light energy to abstract electrons from H(2)O, generating a proton gradient subsequently used for ATP formation. This Nostoc sp. (strain PCC 7120 / SAG 25.82 / UTEX 2576) protein is Photosystem II reaction center protein T.